Consider the following 112-residue polypeptide: Low molecular weight protein antigen 6 (112 aa).

It is found in the secreted. The protein is Low molecular weight protein antigen 6 (cfp6) of Mycobacterium bovis (strain ATCC BAA-935 / AF2122/97).